The sequence spans 101 residues: NADH-quinone oxidoreductase subunit K (101 aa).

3 helical membrane passes run 4 to 24 (VYDY…GIML), 29 to 49 (IILL…NFIA), and 61 to 81 (VFVF…LAIV).

The protein belongs to the complex I subunit 4L family. NDH-1 is composed of 14 different subunits. Subunits NuoA, H, J, K, L, M, N constitute the membrane sector of the complex.

It localises to the cell inner membrane. It carries out the reaction a quinone + NADH + 5 H(+)(in) = a quinol + NAD(+) + 4 H(+)(out). Functionally, NDH-1 shuttles electrons from NADH, via FMN and iron-sulfur (Fe-S) centers, to quinones in the respiratory chain. The immediate electron acceptor for the enzyme in this species is believed to be ubiquinone. Couples the redox reaction to proton translocation (for every two electrons transferred, four hydrogen ions are translocated across the cytoplasmic membrane), and thus conserves the redox energy in a proton gradient. In Legionella pneumophila (strain Paris), this protein is NADH-quinone oxidoreductase subunit K.